A 237-amino-acid chain; its full sequence is Orotidine 5'-phosphate decarboxylase (237 aa).

Residues Asp-17, Lys-39, 66–75, Thr-121, Arg-182, Gln-191, Gly-211, and Arg-212 each bind substrate; that span reads DLKLHDIGNT. Catalysis depends on Lys-68, which acts as the Proton donor.

Belongs to the OMP decarboxylase family. Type 1 subfamily. Homodimer.

It carries out the reaction orotidine 5'-phosphate + H(+) = UMP + CO2. It functions in the pathway pyrimidine metabolism; UMP biosynthesis via de novo pathway; UMP from orotate: step 2/2. In terms of biological role, catalyzes the decarboxylation of orotidine 5'-monophosphate (OMP) to uridine 5'-monophosphate (UMP). The chain is Orotidine 5'-phosphate decarboxylase from Rhodopseudomonas palustris (strain TIE-1).